The following is a 263-amino-acid chain: uncharacterized protein (263 aa).

A disordered region spans residues 183–263 (APHDRPEGVP…PPSTNTKGAA (81 aa)). 2 stretches are compositionally biased toward polar residues: residues 230-239 (SRPTAPSRPS) and 253-263 (TPPSTNTKGAA).

Functionally, probably does not play a direct role in plasmid integration or excision. This is an uncharacterized protein from Saccharopolyspora erythraea (Streptomyces erythraeus).